The sequence spans 348 residues: Nicotinate-nucleotide--dimethylbenzimidazole phosphoribosyltransferase (348 aa).

The active-site Proton acceptor is the glutamate 316.

The protein belongs to the CobT family.

It carries out the reaction 5,6-dimethylbenzimidazole + nicotinate beta-D-ribonucleotide = alpha-ribazole 5'-phosphate + nicotinate + H(+). It functions in the pathway nucleoside biosynthesis; alpha-ribazole biosynthesis; alpha-ribazole from 5,6-dimethylbenzimidazole: step 1/2. Catalyzes the synthesis of alpha-ribazole-5'-phosphate from nicotinate mononucleotide (NAMN) and 5,6-dimethylbenzimidazole (DMB). The protein is Nicotinate-nucleotide--dimethylbenzimidazole phosphoribosyltransferase of Xanthomonas oryzae pv. oryzae (strain PXO99A).